The sequence spans 57 residues: COP9 signalosome complex subunit 9 (57 aa).

Phosphothreonine is present on Thr26.

It belongs to the CSN9 family. Component of the CSN complex, composed of COPS1/GPS1, COPS2, COPS3, COPS4, COPS5, COPS6, COPS7 (COPS7A or COPS7B), COPS8 and COPS9. In the complex, it interacts directly with COPS3, COPS5 and COPS6.

The protein localises to the nucleus. Its subcellular location is the cytoplasm. It localises to the nucleoplasm. Functionally, component of the COP9 signalosome complex (CSN), a complex involved in various cellular and developmental processes. The CSN complex is an essential regulator of the ubiquitin (Ubl) conjugation pathway by mediating the deneddylation of the cullin subunits of SCF-type E3 ligase complexes, leading to decrease the Ubl ligase activity of SCF-type complexes such as SCF, CSA or DDB2. The complex is also involved in phosphorylation of p53/TP53, c-jun/JUN, IkappaBalpha/NFKBIA, ITPK1 and IRF8/ICSBP, possibly via its association with CK2 and PKD kinases. CSN-dependent phosphorylation of TP53 and JUN promotes and protects degradation by the Ubl system, respectively. Plays a role in cell proliferation. In Mus musculus (Mouse), this protein is COP9 signalosome complex subunit 9.